Consider the following 159-residue polypeptide: Probable cyclic pyranopterin monophosphate synthase accessory protein (159 aa).

D128 is a catalytic residue.

The protein belongs to the MoaC family.

Its pathway is cofactor biosynthesis; molybdopterin biosynthesis. Together with MoaA, is involved in the conversion of 5'-GTP to cyclic pyranopterin monophosphate (cPMP or molybdopterin precursor Z). This Methanothermobacter thermautotrophicus (strain ATCC 29096 / DSM 1053 / JCM 10044 / NBRC 100330 / Delta H) (Methanobacterium thermoautotrophicum) protein is Probable cyclic pyranopterin monophosphate synthase accessory protein.